The sequence spans 156 residues: 6,7-dimethyl-8-ribityllumazine synthase (156 aa).

5-amino-6-(D-ribitylamino)uracil-binding positions include Phe-25, 59 to 61 (AWE), and 83 to 85 (AVI). 88–89 (ST) provides a ligand contact to (2S)-2-hydroxy-3-oxobutyl phosphate. The Proton donor role is filled by His-91. Asn-116 serves as a coordination point for 5-amino-6-(D-ribitylamino)uracil. (2S)-2-hydroxy-3-oxobutyl phosphate is bound at residue Arg-130.

Belongs to the DMRL synthase family. In terms of assembly, forms an icosahedral capsid composed of 60 subunits, arranged as a dodecamer of pentamers.

The enzyme catalyses (2S)-2-hydroxy-3-oxobutyl phosphate + 5-amino-6-(D-ribitylamino)uracil = 6,7-dimethyl-8-(1-D-ribityl)lumazine + phosphate + 2 H2O + H(+). It participates in cofactor biosynthesis; riboflavin biosynthesis; riboflavin from 2-hydroxy-3-oxobutyl phosphate and 5-amino-6-(D-ribitylamino)uracil: step 1/2. Functionally, catalyzes the formation of 6,7-dimethyl-8-ribityllumazine by condensation of 5-amino-6-(D-ribitylamino)uracil with 3,4-dihydroxy-2-butanone 4-phosphate. This is the penultimate step in the biosynthesis of riboflavin. The protein is 6,7-dimethyl-8-ribityllumazine synthase of Acinetobacter baumannii (strain AB0057).